The chain runs to 254 residues: Major prion protein (254 aa).

Positions 1–22 (MANLSYWLLALFVATWTDVGLC) are cleaved as a signal peptide. The interaction with GRB2, ERI3 and SYN1 stretch occupies residues 23 to 231 (KKRPKPGGWN…SQAYYDGRRS (209 aa)). The tract at residues 25 to 108 (RPKPGGWNTG…WNKPNKPKTS (84 aa)) is disordered. Tandem repeats lie at residues 51-59 (PQGGGTWGQ), 60-67 (PHGGGWGQ), 68-75 (PHGGGWGQ), 76-83 (PHGGGWGQ), and 84-91 (PHGGGWGQ). A 5 X 8 AA tandem repeats of P-H-G-G-G-W-G-Q region spans residues 51 to 91 (PQGGGTWGQPHGGGWGQPHGGGWGQPHGGGWGQPHGGGWGQ). Gly residues predominate over residues 52–95 (QGGGTWGQPHGGGWGQPHGGGWGQPHGGGWGQPHGGGWGQGGGT). Residues His61, Gly62, Gly63, His69, Gly70, Gly71, His77, Gly78, Gly79, His85, Gly86, and Gly87 each contribute to the Cu(2+) site. The tract at residues 90–231 (GQGGGTHNQW…SQAYYDGRRS (142 aa)) is prP27-30 (protease resistant core). Residues Cys179 and Cys214 are joined by a disulfide bond. 2 N-linked (GlcNAc...) asparagine glycosylation sites follow: Asn181 and Asn197. Ser231 carries the GPI-anchor amidated serine lipid modification. Positions 232–254 (SAVLFSSPPVILLISFLIFLIVG) are cleaved as a propeptide — removed in mature form.

This sequence belongs to the prion family. As to quaternary structure, monomer and homodimer. Has a tendency to aggregate into amyloid fibrils containing a cross-beta spine, formed by a steric zipper of superposed beta-strands. Soluble oligomers may represent an intermediate stage on the path to fibril formation. Copper binding may promote oligomerization. Interacts with GRB2, APP, ERI3/PRNPIP and SYN1. Mislocalized cytosolically exposed PrP interacts with MGRN1; this interaction alters MGRN1 subcellular location and causes lysosomal enlargement. Interacts with KIAA1191.

The protein localises to the cell membrane. The protein resides in the golgi apparatus. In terms of biological role, its primary physiological function is unclear. Has cytoprotective activity against internal or environmental stresses. May play a role in neuronal development and synaptic plasticity. May be required for neuronal myelin sheath maintenance. May play a role in iron uptake and iron homeostasis. Soluble oligomers are toxic to cultured neuroblastoma cells and induce apoptosis (in vitro). Association with GPC1 (via its heparan sulfate chains) targets PRNP to lipid rafts. Also provides Cu(2+) or Zn(2+) for the ascorbate-mediated GPC1 deaminase degradation of its heparan sulfate side chains. The chain is Major prion protein (PRNP) from Nothocricetulus migratorius (Gray dwarf hamster).